The primary structure comprises 293 residues: Ribosomal protein L11 methyltransferase (293 aa).

Residues Thr-145, Gly-166, Asp-188, and Asn-230 each coordinate S-adenosyl-L-methionine.

It belongs to the methyltransferase superfamily. PrmA family.

The protein localises to the cytoplasm. The catalysed reaction is L-lysyl-[protein] + 3 S-adenosyl-L-methionine = N(6),N(6),N(6)-trimethyl-L-lysyl-[protein] + 3 S-adenosyl-L-homocysteine + 3 H(+). Functionally, methylates ribosomal protein L11. The chain is Ribosomal protein L11 methyltransferase from Shewanella piezotolerans (strain WP3 / JCM 13877).